Here is a 638-residue protein sequence, read N- to C-terminus: Chaperone protein DnaK (638 aa).

Residue Thr-197 is modified to Phosphothreonine; by autocatalysis. The disordered stretch occupies residues 600-638 (SGAQGGAQAGPGAGAGQQANQGSSNNKEDIQDADFEEVK). A compositionally biased stretch (gly residues) spans 602–614 (AQGGAQAGPGAGA). A compositionally biased stretch (low complexity) spans 615 to 624 (GQQANQGSSN). A compositionally biased stretch (basic and acidic residues) spans 625–638 (NKEDIQDADFEEVK).

This sequence belongs to the heat shock protein 70 family.

Its function is as follows. Acts as a chaperone. In Phocaeicola vulgatus (strain ATCC 8482 / DSM 1447 / JCM 5826 / CCUG 4940 / NBRC 14291 / NCTC 11154) (Bacteroides vulgatus), this protein is Chaperone protein DnaK.